Reading from the N-terminus, the 315-residue chain is Fucose-specific lectin (315 aa).

6 tandem repeats follow at residues 2 to 53 (STPG…KNVI), 54 to 103 (GNAK…GGAK), 104 to 155 (FQVA…LGGA), 156 to 207 (LPGT…TIFD), 208 to 260 (RAPP…ITPV), and 261 to 315 (IQGS…LPPA). The segment at 2-315 (STPGAQQVLF…QLGRSALPPA (314 aa)) is 6 X approximate tandem repeats. Arginine 25, glutamate 37, tryptophan 44, arginine 73, glutamate 85, tryptophan 94, glycine 98, arginine 126, glutamate 138, tryptophan 146, threonine 150, arginine 177, glutamine 189, tryptophan 198, arginine 230, and glutamine 242 together coordinate alpha-L-fucose. Zn(2+)-binding residues include cysteine 244, aspartate 246, and histidine 252. Alpha-L-fucose-binding residues include arginine 282 and glutamate 296.

The protein belongs to the fungal fucose-specific lectin family. In terms of assembly, homodimer.

Multispecific lectin that is able to recognize L-fucose in all possible linkages. These could be found not only in decomposed plant matter in soil, which is the natural environment for A.fumigatus, but also in various epitopes on human tissues. Mediates binding of A.fumigatus conidia to airway mucin in a fucose dependent manner. Stimulates IL-8 production by human bronchial cells in a dose-dependent manner, contributing to the inflammatory response observed upon the exposure of a patient to A.fumigatus, and thus might be an important virulence factor involved in an early stage of A.fumigatus infection. The protein is Fucose-specific lectin of Aspergillus fumigatus (strain ATCC MYA-4609 / CBS 101355 / FGSC A1100 / Af293) (Neosartorya fumigata).